Reading from the N-terminus, the 84-residue chain is Small ribosomal subunit protein uS17 (84 aa).

It belongs to the universal ribosomal protein uS17 family. In terms of assembly, part of the 30S ribosomal subunit.

In terms of biological role, one of the primary rRNA binding proteins, it binds specifically to the 5'-end of 16S ribosomal RNA. The polypeptide is Small ribosomal subunit protein uS17 (Yersinia enterocolitica serotype O:8 / biotype 1B (strain NCTC 13174 / 8081)).